Here is a 316-residue protein sequence, read N- to C-terminus: tRNA dimethylallyltransferase (316 aa).

17-24 (GPTASGKT) provides a ligand contact to ATP. 19 to 24 (TASGKT) serves as a coordination point for substrate. Interaction with substrate tRNA regions lie at residues 42–45 (DSVL), 166–170 (QRLSR), 247–252 (RCVGYR), and 280–287 (KRQITWLR).

It belongs to the IPP transferase family. Monomer. Mg(2+) serves as cofactor.

The enzyme catalyses adenosine(37) in tRNA + dimethylallyl diphosphate = N(6)-dimethylallyladenosine(37) in tRNA + diphosphate. Catalyzes the transfer of a dimethylallyl group onto the adenine at position 37 in tRNAs that read codons beginning with uridine, leading to the formation of N6-(dimethylallyl)adenosine (i(6)A). In Shigella flexneri, this protein is tRNA dimethylallyltransferase.